A 236-amino-acid chain; its full sequence is UPF0257 lipoprotein YnfC (236 aa).

Residues 1–16 form the signal peptide; that stretch reads MKKPLLLTLLCMILAG. C17 carries N-palmitoyl cysteine lipidation. C17 carries S-diacylglycerol cysteine lipidation.

Belongs to the UPF0257 family.

It localises to the cell membrane. This chain is UPF0257 lipoprotein YnfC, found in Salmonella heidelberg (strain SL476).